Consider the following 498-residue polypeptide: Glycerol kinase (498 aa).

Thr-12 is a binding site for ADP. ATP contacts are provided by Thr-12, Thr-13, and Ser-14. Thr-12 serves as a coordination point for sn-glycerol 3-phosphate. Arg-16 contacts ADP. The sn-glycerol 3-phosphate site is built by Arg-82, Glu-83, Tyr-134, and Asp-241. Arg-82, Glu-83, Tyr-134, Asp-241, and Gln-242 together coordinate glycerol. Residues Thr-263 and Gly-310 each contribute to the ADP site. ATP contacts are provided by Thr-263, Gly-310, Gln-314, and Gly-411. ADP-binding residues include Gly-411 and Asn-415.

This sequence belongs to the FGGY kinase family.

The enzyme catalyses glycerol + ATP = sn-glycerol 3-phosphate + ADP + H(+). It participates in polyol metabolism; glycerol degradation via glycerol kinase pathway; sn-glycerol 3-phosphate from glycerol: step 1/1. Inhibited by fructose 1,6-bisphosphate (FBP). Key enzyme in the regulation of glycerol uptake and metabolism. Catalyzes the phosphorylation of glycerol to yield sn-glycerol 3-phosphate. This chain is Glycerol kinase, found in Herminiimonas arsenicoxydans.